The primary structure comprises 123 residues: Ribosome-binding factor A (123 aa).

It belongs to the RbfA family. Monomer. Binds 30S ribosomal subunits, but not 50S ribosomal subunits or 70S ribosomes.

The protein localises to the cytoplasm. One of several proteins that assist in the late maturation steps of the functional core of the 30S ribosomal subunit. Associates with free 30S ribosomal subunits (but not with 30S subunits that are part of 70S ribosomes or polysomes). Required for efficient processing of 16S rRNA. May interact with the 5'-terminal helix region of 16S rRNA. This is Ribosome-binding factor A from Chlorobium chlorochromatii (strain CaD3).